We begin with the raw amino-acid sequence, 455 residues long: Probable glucarate dehydratase (455 aa).

Residues His42, Thr113, Tyr160, and Lys215 each coordinate substrate. The Proton acceptor role is filled by Lys217. Mg(2+) is bound by residues Asp245, Glu276, and Asn299. Residue 245-247 coordinates substrate; the sequence is DPN. Residues Asn299, 349-351, His378, and Arg431 each bind substrate; that span reads HSN. His349 serves as the catalytic Proton acceptor.

The protein belongs to the mandelate racemase/muconate lactonizing enzyme family. GlucD subfamily. Mg(2+) is required as a cofactor.

The catalysed reaction is D-glucarate = 5-dehydro-4-deoxy-D-glucarate + H2O. It participates in carbohydrate acid metabolism; D-glucarate degradation; 2,5-dioxopentanoate from D-glucarate: step 1/2. Its function is as follows. Catalyzes the dehydration of glucarate to 5-keto-4-deoxy-D-glucarate (5-kdGluc). This Bacillus subtilis (strain 168) protein is Probable glucarate dehydratase (gudD).